The following is a 405-amino-acid chain: Riboflavin biosynthesis protein RibBA (405 aa).

The tract at residues 1 to 205 (MSEIQLNTIE…IKDLIAYRLR (205 aa)) is DHBP synthase. Residues 30 to 31 (RE), Asp-35, 144 to 148 (RAGHT), and Glu-168 contribute to the D-ribulose 5-phosphate site. Mg(2+) is bound at residue Glu-31. Residue His-147 participates in Mg(2+) binding. The tract at residues 206 to 405 (TESIVENGVE…RMGHVLHNIK (200 aa)) is GTP cyclohydrolase II. Position 256 to 260 (256 to 260 (RVHSS)) interacts with GTP. Zn(2+)-binding residues include Cys-261, Cys-272, and Cys-274. GTP contacts are provided by residues Gln-277, 299 to 301 (EGR), and Thr-321. Catalysis depends on Asp-333, which acts as the Proton acceptor; for GTP cyclohydrolase activity. Catalysis depends on Arg-335, which acts as the Nucleophile; for GTP cyclohydrolase activity. GTP is bound by residues Ser-356 and Lys-361.

This sequence in the N-terminal section; belongs to the DHBP synthase family. It in the C-terminal section; belongs to the GTP cyclohydrolase II family. Mg(2+) is required as a cofactor. Requires Mn(2+) as cofactor. The cofactor is Zn(2+).

The catalysed reaction is D-ribulose 5-phosphate = (2S)-2-hydroxy-3-oxobutyl phosphate + formate + H(+). It catalyses the reaction GTP + 4 H2O = 2,5-diamino-6-hydroxy-4-(5-phosphoribosylamino)-pyrimidine + formate + 2 phosphate + 3 H(+). Its pathway is cofactor biosynthesis; riboflavin biosynthesis; 2-hydroxy-3-oxobutyl phosphate from D-ribulose 5-phosphate: step 1/1. The protein operates within cofactor biosynthesis; riboflavin biosynthesis; 5-amino-6-(D-ribitylamino)uracil from GTP: step 1/4. Functionally, catalyzes the conversion of D-ribulose 5-phosphate to formate and 3,4-dihydroxy-2-butanone 4-phosphate. Its function is as follows. Catalyzes the conversion of GTP to 2,5-diamino-6-ribosylamino-4(3H)-pyrimidinone 5'-phosphate (DARP), formate and pyrophosphate. This is Riboflavin biosynthesis protein RibBA from Parabacteroides distasonis (strain ATCC 8503 / DSM 20701 / CIP 104284 / JCM 5825 / NCTC 11152).